The sequence spans 379 residues: Cobalt-precorrin-5B C(1)-methyltransferase (379 aa).

It belongs to the CbiD family.

The catalysed reaction is Co-precorrin-5B + S-adenosyl-L-methionine = Co-precorrin-6A + S-adenosyl-L-homocysteine. It participates in cofactor biosynthesis; adenosylcobalamin biosynthesis; cob(II)yrinate a,c-diamide from sirohydrochlorin (anaerobic route): step 6/10. In terms of biological role, catalyzes the methylation of C-1 in cobalt-precorrin-5B to form cobalt-precorrin-6A. The protein is Cobalt-precorrin-5B C(1)-methyltransferase of Salmonella arizonae (strain ATCC BAA-731 / CDC346-86 / RSK2980).